Reading from the N-terminus, the 315-residue chain is Ribose-phosphate pyrophosphokinase (315 aa).

Residues 37–39 and 96–97 contribute to the ATP site; these read DSE and RQ. Mg(2+)-binding residues include histidine 131 and aspartate 170. Lysine 194 is an active-site residue. Residues arginine 196, aspartate 220, and 224-228 each bind D-ribose 5-phosphate; that span reads DTGGT.

The protein belongs to the ribose-phosphate pyrophosphokinase family. Class I subfamily. In terms of assembly, homohexamer. Requires Mg(2+) as cofactor.

The protein resides in the cytoplasm. The enzyme catalyses D-ribose 5-phosphate + ATP = 5-phospho-alpha-D-ribose 1-diphosphate + AMP + H(+). It functions in the pathway metabolic intermediate biosynthesis; 5-phospho-alpha-D-ribose 1-diphosphate biosynthesis; 5-phospho-alpha-D-ribose 1-diphosphate from D-ribose 5-phosphate (route I): step 1/1. Its function is as follows. Involved in the biosynthesis of the central metabolite phospho-alpha-D-ribosyl-1-pyrophosphate (PRPP) via the transfer of pyrophosphoryl group from ATP to 1-hydroxyl of ribose-5-phosphate (Rib-5-P). The chain is Ribose-phosphate pyrophosphokinase from Marinomonas sp. (strain MWYL1).